The sequence spans 90 residues: Mitochondrial import inner membrane translocase subunit Tim8 A (90 aa).

The Twin CX3C motif motif lies at Cys-36–Cys-59. 2 disulfides stabilise this stretch: Cys-36–Cys-59 and Cys-40–Cys-55.

It belongs to the small Tim family. Heterohexamer; composed of 3 copies of TIMM8A and 3 copies of TIMM13, named soluble 70 kDa complex. Associates with the TIM22 complex, whose core is composed of TIMM22.

It is found in the mitochondrion inner membrane. Functionally, mitochondrial intermembrane chaperone that participates in the import and insertion of some multi-pass transmembrane proteins into the mitochondrial inner membrane. Also required for the transfer of beta-barrel precursors from the TOM complex to the sorting and assembly machinery (SAM complex) of the outer membrane. Acts as a chaperone-like protein that protects the hydrophobic precursors from aggregation and guide them through the mitochondrial intermembrane space. The TIMM8-TIMM13 complex mediates the import of some proteins while the predominant TIMM9-TIMM10 70 kDa complex mediates the import of much more proteins. The polypeptide is Mitochondrial import inner membrane translocase subunit Tim8 A (timm8a) (Takifugu rubripes (Japanese pufferfish)).